Reading from the N-terminus, the 470-residue chain is Meiosis-specific with OB domain-containing protein (470 aa).

Positions 167–272 form a DNA-binding region, OB; it reads IINVLAAVRS…EANILLNFIR (106 aa).

It belongs to the MEIOB family. Component of a multiprotein complex with RPA2 and SPATA22. Interacts with SPATA22. Interacts with the complex BRME1:HSF2BP:BRCA2.

It is found in the cytoplasm. It localises to the nucleus. The protein resides in the chromosome. Single-stranded DNA-binding protein required for homologous recombination in meiosis I. Required for double strand breaks (DSBs) repair and crossover formation and promotion of faithful and complete synapsis. Not required for the initial loading of recombinases but required to maintain a proper number of RAD51 and DMC1 foci after the zygotene stage. May act by ensuring the stabilization of recombinases, which is required for successful homology search and meiotic recombination. Displays Single-stranded DNA 3'-5' exonuclease activity in vitro. The chain is Meiosis-specific with OB domain-containing protein from Rattus norvegicus (Rat).